Consider the following 340-residue polypeptide: Phosphoribosylformylglycinamidine cyclo-ligase (340 aa).

It belongs to the AIR synthase family.

The protein localises to the cytoplasm. It carries out the reaction 2-formamido-N(1)-(5-O-phospho-beta-D-ribosyl)acetamidine + ATP = 5-amino-1-(5-phospho-beta-D-ribosyl)imidazole + ADP + phosphate + H(+). It functions in the pathway purine metabolism; IMP biosynthesis via de novo pathway; 5-amino-1-(5-phospho-D-ribosyl)imidazole from N(2)-formyl-N(1)-(5-phospho-D-ribosyl)glycinamide: step 2/2. In Streptococcus pneumoniae serotype 19F (strain G54), this protein is Phosphoribosylformylglycinamidine cyclo-ligase.